The following is a 201-amino-acid chain: 3-isopropylmalate dehydratase small subunit (201 aa).

Belongs to the LeuD family. LeuD type 1 subfamily. In terms of assembly, heterodimer of LeuC and LeuD.

The catalysed reaction is (2R,3S)-3-isopropylmalate = (2S)-2-isopropylmalate. Its pathway is amino-acid biosynthesis; L-leucine biosynthesis; L-leucine from 3-methyl-2-oxobutanoate: step 2/4. Catalyzes the isomerization between 2-isopropylmalate and 3-isopropylmalate, via the formation of 2-isopropylmaleate. The sequence is that of 3-isopropylmalate dehydratase small subunit from Roseobacter denitrificans (strain ATCC 33942 / OCh 114) (Erythrobacter sp. (strain OCh 114)).